The sequence spans 66 residues: Large ribosomal subunit protein bL35 (66 aa).

This sequence belongs to the bacterial ribosomal protein bL35 family.

This Acholeplasma laidlawii (strain PG-8A) protein is Large ribosomal subunit protein bL35.